The sequence spans 209 residues: Small ribosomal subunit protein uS3c (209 aa).

The 71-residue stretch at 39–109 (IRSCIEKQLH…QIRINLIEIT (71 aa)) folds into the KH type-2 domain.

It belongs to the universal ribosomal protein uS3 family. As to quaternary structure, part of the 30S ribosomal subunit.

It localises to the plastid. It is found in the chloroplast. In Gracilaria tenuistipitata (Red alga), this protein is Small ribosomal subunit protein uS3c (rps3).